Here is a 121-residue protein sequence, read N- to C-terminus: Flagellar protein FliT (121 aa).

The tract at residues 1 to 50 is required for homodimerization; sequence MNHAPHLYFAWQQLVEKSQLMLRLATEEQWDELIASEMAYVNAVQEIAHL. Residues 60-98 are fliD binding; sequence MQEQLRPMLRLILDNESKVKQLLQIRMDELAKLVGQSSV.

Belongs to the FliT family. As to quaternary structure, homodimer. Interacts with FliD and FlhC.

The protein localises to the cytoplasm. It localises to the cytosol. In terms of biological role, dual-function protein that regulates the transcription of class 2 flagellar operons and that also acts as an export chaperone for the filament-capping protein FliD. As a transcriptional regulator, acts as an anti-FlhDC factor; it directly binds FlhC, thus inhibiting the binding of the FlhC/FlhD complex to class 2 promoters, resulting in decreased expression of class 2 flagellar operons. As a chaperone, effects FliD transition to the membrane by preventing its premature polymerization, and by directing it to the export apparatus. The polypeptide is Flagellar protein FliT (Escherichia coli (strain ATCC 8739 / DSM 1576 / NBRC 3972 / NCIMB 8545 / WDCM 00012 / Crooks)).